A 2663-amino-acid polypeptide reads, in one-letter code: MPKGGCPKAPQQEELPLSSDMVEKQTGKKDKDKVSLTKTPKLERGDGGKEVRERASKRKLPFTAGANGEQKDSDTEKQGPERKRIKKEPVTRKAGLLFGMGLSGIRAGYPLSERQQVALLMQMTAEESANSPVDTTPKHPSQSTVCQKGTPNSASKTKDKVNKRNERGETRLHRAAIRGDARRIKELISEGADVNVKDFAGWTALHEACNRGYYDVAKQLLAAGAEVNTKGLDDDTPLHDAANNGHYKVVKLLLRYGGNPQQSNRKGETPLKVANSPTMVNLLLGKGTYTSSEESSTESSEEEDAPSFAPSSSVDGNNTDSEFEKGLKHKAKNPEPQKATAPVKDEYEFDEDDEQDRVPPVDDKHLLKKDYRKETKSNSFISIPKMEVKSYTKNNTIAPKKASHRILSDTSDEEDASVTVGTGEKLRLSAHTILPGSKTREPSNAKQQKEKNKVKKKRKKETKGREVRFGKRSDKFCSSESESESSESGEDDRDSLGSSGCLKGSPLVLKDPSLFSSLSASSTSSHGSSAAQKQNPSHTDQHTKHWRTDNWKTISSPAWSEVSSLSDSTRTRLTSESDYSSEGSSVESLKPVRKRQEHRKRASLSEKKSPFLSSAEGAVPKLDKEGKVVKKHKTKHKHKNKEKGQCSISQELKLKSFTYEYEDSKQKSDKAILLENDLSTENKLKVLKHDRDHFKKEEKLSKMKLEEKEWLFKDEKSLKRIKDTNKDISRSFREEKDRSNKAEKERSLKEKSPKEEKLRLYKEERKKKSKDRPSKLEKKNDLKEDKISKEKEKIFKEDKEKLKKEKVYREDSAFDEYCNKNQFLENEDTKFSLSDDQRDRWFSDLSDSSFDFKGEDSWDSPVTDYRDMKSDSVAKLILETVKEDSKERRRDSRAREKRDYREPFFRKKDRDYLDKNSEKRKEQTEKHKSVPGYLSEKDKKRRESAEAGRDRKDALESCKERRDGRAKPEEAHREELKECGCESGFKDKSDGDFGKGLEPWERHHPAREKEKKDGPDKERKEKTKPERYKEKSSDKDKSEKSILEKCQKDKEFDKCFKEKKDTKEKHKDTHGKDKERKASLDQGKEKKEKAFPGIISEDFSEKKDDKKGKEKSWYIADIFTDESEDDRDSCMGSGFKMGEASDLPRTDGLQEKEEGREAYASDRHRKSSDKQHPERQKDKEPRDRRKDRGAADAGRDKKEKVFEKHKEKKDKESTEKYKDRKDRASVDSTQDKKNKQKLPEKAEKKHAAEDKAKSKHKEKSDKEHSKERKSSRSADAEKSLLEKLEEEALHEYREDSNDKISEVSSDSFTDRGQEPGLTAFLEVSFTEPPGDDKPRESACLPEKLKEKERHRHSSSSSKKSHDRERAKKEKAEKKEKGEDYKEGGSRKDSGQYEKDFLEADAYGVSYNMKADIEDELDKTIELFSTEKKDKNDSEREPSKKIEKELKPYGSSAINILKEKKKREKHREKWRDEKERHRDRHADGLLRHHRDELLRHHRDEQKPATRDKDSPPRVLKDKSRDEGPRLGDAKLKEKFKDGAEKEKGDPVKMSNGNDKVAPSKDPGKKDARPREKLLGDGDLMMTSFERMLSQKDLEIEERHKRHKERMKQMEKLRHRSGDPKLKEKAKPADDGRKKGLDIPAKKPPGLDPPFKDKKLKESTPIPPAAENKLHPASGADSKDWLAGPHMKEVLPASPRPDQSRPTGVPTPTSVLSCPSYEEVMHTPRTPSCSADDYADLVFDCADSQHSTPVPTAPTSACSPSFFDRFSVASSGLSENASQAPARPLSTNLYRSVSVDIRRTPEEEFSVGDKLFRQQSVPAASSYDSPMPPSMEDRAPLPPVPAEKFACLSPGYYSPDYGLPSPKVDALHCPPAAVVTVTPSPEGVFSSLQAKPSPSPRAELLVPSLEGALPPDLDTSEDQQATAAIIPPEPSYLEPLDEGPFSAVITEEPVEWAHPSEQALASSLIGGTSENPVSWPVGSDLLLKSPQRFPESPKRFCPADPLHSAAPGPFSASEAPYPAPPASPAPYALPVAEPGLEDVKDGVDAVPAAISTSEAAPYAPPSGLESFFSNCKSLPEAPLDVAPEPACVAAVAQVEALGPLENSFLDGSRGLSHLGQVEPVPWADAFAGPEDDLDLGPFSLPELPLQTKDAADGEAEPVEESLAPPEEMPPGAPGVINGGDVSTVVAEEPPALPPDQASTRLPAELEPEPSGEPKLDVALEAAVEAETVPEERARGDPDSSVEPAPVPPEQRPLGSGDQGAEAEGPPAASLCAPDGPAPNTVAQAQAADGAGPEDDTEASRAAAPAEGPPGGIQPEAAEPKPTAEAPKAPRVEEIPQRMTRNRAQMLANQSKQGPPPSEKECAPTPAPVTRAKARGSEDDDAQAQHPRKRRFQRSTQQLQQQLNTSTQQTREVIQQTLAAIVDAIKLDAIEPYHSDRANPYFEYLQIRKKIEEKRKILCCITPQAPQCYAEYVTYTGSYLLDGKPLSKLHIPVIAPPPSLAEPLKELFRQQEAVRGKLRLQHSIEREKLIVSCEQEILRVHCRAARTIANQAVPFSACTMLLDSEVYNMPLESQGDENKSVRDRFNARQFISWLQDVDDKYDRMKTCLLMRQQHEAAALNAVQRMEWQLKVQELDPAGHKSLCVNEVPSFYVPMVDVNDDFVLLPA.

2 disordered regions span residues M1–V90 and S128–E169. Composition is skewed to basic and acidic residues over residues M21–R54 and E69–V90. Residues S128–S155 show a composition bias toward polar residues. The segment covering K156–E169 has biased composition (basic and acidic residues). 4 ANK repeats span residues R167 to V196, A200 to T229, D233 to Q262, and K266 to S292. S276 is modified (phosphoserine). Disordered stretches follow at residues Y289–F380, A398–S647, and D723–K783. Residues S295–A305 show a composition bias toward acidic residues. A compositionally biased stretch (polar residues) spans A309–D320. Residues D356–K376 show a composition bias toward basic and acidic residues. Phosphoserine is present on S408. Phosphothreonine is present on T410. S411 is subject to Phosphoserine. Residues K438 to K451 are compositionally biased toward basic and acidic residues. Residues N452 to T462 show a composition bias toward basic residues. Residues K463 to C477 are compositionally biased toward basic and acidic residues. Positions S481–R493 are enriched in acidic residues. Residues S513 to A531 are compositionally biased toward low complexity. Basic and acidic residues predominate over residues T539–N550. Residues W551–V562 show a composition bias toward polar residues. The span at E576–S588 shows a compositional bias: low complexity. 2 stretches are compositionally biased toward basic residues: residues P591 to A602 and V629 to K641. The residue at position 834 (S834) is a Phosphoserine. 4 stretches are compositionally biased toward basic and acidic residues: residues V881–K928, S935–L1043, K1059–A1090, and F1099–S1112. Disordered stretches follow at residues V881–L1043 and K1059–E1393. S1079 carries the post-translational modification Phosphoserine. Position 1120 is a phosphothreonine (T1120). Position 1123 is a phosphoserine (S1123). Composition is skewed to basic and acidic residues over residues D1142–S1301, G1330–K1347, and K1359–E1393. T1419 is subject to Phosphothreonine. 5 stretches are compositionally biased toward basic and acidic residues: residues S1424–K1446, R1466–P1545, A1556–G1574, L1587–R1597, and M1605–A1639. The tract at residues S1424–L1710 is disordered. The residue at position 1509 (S1509) is a Phosphoserine. S1692 carries the phosphoserine modification. Residues S1698–L1710 are compositionally biased toward polar residues. S1792 carries the phosphoserine modification. The tract at residues S1814 to P1836 is disordered. A Phosphoserine modification is found at S1847. Y1850 and Y1851 each carry phosphotyrosine. Phosphoserine is present on residues S1852, S1859, and S1990. Disordered regions lie at residues P1988–P2019 and L2131–Q2406. Composition is skewed to low complexity over residues I2310–P2324 and R2391–Q2406. The interval A2369–A2663 is important for protein degradation.

In terms of assembly, interacts with the PAS region of the p160 coactivators. Subject to proteasomal degradation which is probably essential to regulate its activity.

Its subcellular location is the nucleus. Chromatin regulator which modulates histone acetylation and gene expression in neural precursor cells. May recruit histone deacetylases (HDACs) to the p160 coactivators/nuclear receptor complex to inhibit ligand-dependent transactivation. Has a role in proliferation and development of cortical neural precursors. May also regulate bone homeostasis. This chain is Ankyrin repeat domain-containing protein 11 (ANKRD11), found in Homo sapiens (Human).